The following is a 487-amino-acid chain: Catalase (487 aa).

Residues Met1–Ser20 are disordered. Catalysis depends on residues His54 and Asn127. Heme is bound at residue Tyr337.

Belongs to the catalase family. The cofactor is heme.

It carries out the reaction 2 H2O2 = O2 + 2 H2O. Its function is as follows. Decomposes hydrogen peroxide into water and oxygen; serves to protect cells from the toxic effects of hydrogen peroxide. This chain is Catalase (katA), found in Streptomyces coelicolor (strain ATCC BAA-471 / A3(2) / M145).